We begin with the raw amino-acid sequence, 249 residues long: Probable transcriptional regulatory protein Strop_1792 (249 aa).

This sequence belongs to the TACO1 family.

It localises to the cytoplasm. The protein is Probable transcriptional regulatory protein Strop_1792 of Salinispora tropica (strain ATCC BAA-916 / DSM 44818 / JCM 13857 / NBRC 105044 / CNB-440).